The sequence spans 254 residues: uncharacterized protein (254 aa).

The first 22 residues, Met1–Gly22, serve as a signal peptide directing secretion. Cys23 is lipidated: N-palmitoyl cysteine. A lipid anchor (S-diacylglycerol cysteine) is attached at Cys23.

Belongs to the staphylococcal tandem lipoprotein family.

The protein localises to the cell membrane. This is an uncharacterized protein from Staphylococcus aureus (strain MSSA476).